We begin with the raw amino-acid sequence, 128 residues long: 3-aminoacrylate deaminase RutC (128 aa).

The protein belongs to the RutC family.

It carries out the reaction (Z)-3-aminoacrylate + H2O + H(+) = 3-oxopropanoate + NH4(+). Its function is as follows. Involved in pyrimidine catabolism. Catalyzes the deamination of 3-aminoacrylate to malonic semialdehyde, a reaction that can also occur spontaneously. RutC may facilitate the reaction and modulate the metabolic fitness, rather than catalyzing essential functions. In Enterobacter cloacae subsp. cloacae (strain ATCC 13047 / DSM 30054 / NBRC 13535 / NCTC 10005 / WDCM 00083 / NCDC 279-56), this protein is 3-aminoacrylate deaminase RutC.